The sequence spans 326 residues: ELAV-like protein 1 (326 aa).

Position 2 is an N-acetylserine (S2). S2 is modified (phosphoserine). The RRM 1 domain maps to 20 to 98; it reads TNLIVNYLPQ…KTIKVSYARP (79 aa). 2 positions are modified to phosphoserine: S100 and S158. The RRM 2 domain maps to 106 to 186; it reads ANLYISGLPR…EPITVKFAAN (81 aa). Residue K191 forms a Glycyl lysine isopeptide (Lys-Gly) (interchain with G-Cter in SUMO2) linkage. Residues S197 and S202 each carry the phosphoserine modification. An Omega-N-methylarginine modification is found at R206. R217 carries the post-translational modification Asymmetric dimethylarginine; by CARM1; alternate. Position 217 is an omega-N-methylarginine; alternate (R217). Phosphoserine is present on residues S221 and S318. In terms of domain architecture, RRM 3 spans 244–322; that stretch reads WCIFIYNLGQ…KILQVSFKTN (79 aa).

It belongs to the RRM elav family. As to quaternary structure, monomer and homodimer (in vitro). Interacts with ANP32A. Interacts with ZNF385A; the interaction is indirect and mRNA-dependent and may regulate p53/TP53 expression. Identified in a mRNP complex, at least composed of DHX9, DDX3X, ELAVL1, HNRNPU, IGF2BP1, ILF3, PABPC1, PCBP2, PTBP2, STAU1, STAU2, SYNCRIP and YBX1. Interacts with AGO1 and AGO2. Interacts with IGF2BP1; the interaction is enhanced by SEPIN14P20 peptide RBPR. Interacts with IGF2BP2 and IGF2BP3. Interacts with HNRNPL. Interacts with DHX36; this interaction occurs in a RNA-dependent manner. Interacts with ILF3; this interaction occurs in a RNA-dependent manner. Interacts with PLEKHN1. Interacts with SHFL; the interaction increases in presence of RNA. Interacts with YBX1; interaction recruits ELAVL1 on C5-methylcytosine (m5C)-containing mRNAs, thereby promoting mRNA stability. Interacts with FXR1. Phosphorylated by MAPKAPK2. Phosphorylated by PRKCD. In terms of processing, methylated at Arg-217 by CARM1 in macrophages in response to LPS challenge. Ubiquitous. Detected in brain, liver, thymus and muscle.

The protein localises to the cytoplasm. The protein resides in the nucleus. It localises to the stress granule. It is found in the P-body. Functionally, RNA-binding protein that binds to the 3'-UTR region of mRNAs and increases their stability. Involved in embryonic stem cell (ESC) differentiation: preferentially binds mRNAs that are not methylated by N6-methyladenosine (m6A), stabilizing them, promoting ESC differentiation. Has also been shown to be capable of binding to m6A-containing mRNAs and contributes to MYC stability by binding to m6A-containing MYC mRNAs. Binds to poly-U elements and AU-rich elements (AREs) in the 3'-UTR of target mRNAs. Binds avidly to the AU-rich element in FOS and IL3/interleukin-3 mRNAs. In the case of the FOS AU-rich element, binds to a core element of 27 nucleotides that contain AUUUA, AUUUUA, and AUUUUUA motifs. Binds preferentially to the 5'-UUUU[AG]UUU-3' motif in vitro. With ZNF385A, binds the 3'-UTR of p53/TP53 mRNA to control their nuclear export induced by CDKN2A. Hence, may regulate p53/TP53 expression and mediate in part the CDKN2A anti-proliferative activity. May also bind with ZNF385A the CCNB1 mRNA. Increases the stability of the leptin mRNA harboring an AU-rich element (ARE) in its 3' UTR. The protein is ELAV-like protein 1 (ELAVL1) of Homo sapiens (Human).